The sequence spans 324 residues: Elongation factor Ts, mitochondrial (324 aa).

The N-terminal 44 residues, 1–44 (MSLLRSLRFFPVACTGRSARAVLLQPSQPWHTLHAGPSLSSSAS), are a transit peptide targeting the mitochondrion. N6-succinyllysine occurs at positions 75 and 132. Ser-269 bears the Phosphoserine mark.

The protein belongs to the EF-Ts family.

It is found in the mitochondrion. Functionally, associates with the EF-Tu.GDP complex and induces the exchange of GDP to GTP. It remains bound to the aminoacyl-tRNA.EF-Tu.GTP complex up to the GTP hydrolysis stage on the ribosome. The protein is Elongation factor Ts, mitochondrial (Tsfm) of Rattus norvegicus (Rat).